A 180-amino-acid chain; its full sequence is dCTP deaminase (180 aa).

Residues 101–106 (KSSFAR) and Asp-117 each bind dCTP. Glu-127 acts as the Proton donor/acceptor in catalysis. DCTP-binding residues include Tyr-159 and Gln-168.

The protein belongs to the dCTP deaminase family. Homotrimer.

It catalyses the reaction dCTP + H2O + H(+) = dUTP + NH4(+). The protein operates within pyrimidine metabolism; dUMP biosynthesis; dUMP from dCTP (dUTP route): step 1/2. Functionally, catalyzes the deamination of dCTP to dUTP. The protein is dCTP deaminase of Ignicoccus hospitalis (strain KIN4/I / DSM 18386 / JCM 14125).